A 351-amino-acid polypeptide reads, in one-letter code: Short-chain dehydrogenase sdnK (351 aa).

NADP(+) contacts are provided by Ile-46, Thr-66, Glu-98, Tyr-224, Lys-228, and Thr-268. Tyr-224 functions as the Proton donor in the catalytic mechanism. The active-site Lowers pKa of active site Tyr is Lys-228.

The protein belongs to the short-chain dehydrogenases/reductases (SDR) family.

It participates in antibiotic biosynthesis. Short-chain dehydrogenase; part of the gene cluster that mediates the biosynthesis of sordarin and hypoxysordarin, glycoside antibiotics with a unique tetracyclic diterpene aglycone structure. First, the geranylgeranyl diphosphate synthase sdnC constructs GGDP from farnesyl diphosphate and isopentenyl diphosphate. The diterpene cyclase sdnA then catalyzes the cyclization of GGDP to afford cycloaraneosene. Cycloaraneosene is then hydroxylated four times by the putative cytochrome P450 monooxygenases sdnB, sdnE, sdnF and sdnH to give a hydroxylated cycloaraneosene derivative such as cycloaraneosene-8,9,13,19-tetraol. Although the order of the hydroxylations is unclear, at least C8, C9 and C13 of the cycloaraneosene skeleton are hydroxylated before the sordaricin formation. Dehydration of the 13-hydroxy group of the hydroxylated cycloaraneosene derivative might be catalyzed by an unassigned hypothetical protein such as sdnG and sdnP to construct the cyclopentadiene moiety. The FAD-dependent oxidoreductase sdnN is proposed to catalyze the oxidation at C9 of the hydroxylated cycloaraneosene derivative and also catalyze the Baeyer-Villiger oxidation to give the lactone intermediate. The presumed lactone intermediate would be hydrolyzed to give an acrolein moiety and a carboxylate moiety. Then, [4+2]cycloaddition would occur between the acrolein moiety and the cyclopentadiene moiety to give sordaricin. SdnN might also be involved in the [4+2]cycloaddition after the hypothesized oxidation to accommodate the oxidized product and prompt the [4+2]cycloaddition. GDP-6-deoxy-D-altrose may be biosynthesized from GDP-D-mannose by the putative GDP-mannose-4,6-dehydratase sdnI and the short-chain dehydrogenase sdnK. The glycosyltransferase sdnJ catalyzes the attachment of 6-deoxy-D-altrose onto the 19-hydroxy group of sordaricin to give 4'-O-demethylsordarin. The methyltransferase sdnD would complete the biosynthesis of sordarin. Sordarin can be further modified into hypoxysordarin. The unique acyl chain at the 3'-hydroxy group of hypoxysordarin would be constructed by an iterative type I PKS sdnO and the trans-acting polyketide methyltransferase sdnL. SdnL would be responsible for the introduction of an alpha-methyl group of the polyketide chain. Alternatively, the beta-lactamase-like protein sdnR might be responsible for the cleavage and transfer of the polyketide chain from the PKS sdnO to sordarin. Two putative cytochrome P450 monooxygenases, sdnQ and sdnT, might catalyze the epoxidations of the polyketide chain to complete the biosynthesis of hypoxysordarin. Transcriptional regulators sdnM and sdnS are presumably encoded for the transcriptional regulation of the expression of the sdn gene cluster. The sequence is that of Short-chain dehydrogenase sdnK from Sordaria araneosa (Pleurage araneosa).